The following is a 439-amino-acid chain: sn-glycerol-3-phosphate-binding periplasmic protein UgpB (439 aa).

Residues 1-25 (MFNNSIHKVSICIALTLTFSANAMA) form the signal peptide. Residues Tyr-67, Glu-91, Ser-146, Ser-272, Gly-309, Tyr-348, and Arg-399 each coordinate sn-glycerol 3-phosphate.

This sequence belongs to the bacterial solute-binding protein 1 family. As to quaternary structure, the complex is composed of two ATP-binding proteins (UgpC), two transmembrane proteins (UgpA and UgpE) and a solute-binding protein (UgpB).

It is found in the periplasm. Its function is as follows. Part of the ABC transporter complex UgpBAEC involved in sn-glycerol-3-phosphate (G3P) import. Binds G3P. The protein is sn-glycerol-3-phosphate-binding periplasmic protein UgpB (ugpB) of Yersinia pestis bv. Antiqua (strain Antiqua).